We begin with the raw amino-acid sequence, 451 residues long: Gamma-aminobutyric acid receptor subunit alpha-2 (451 aa).

The signal sequence occupies residues 1–28 (MRTKLSTCNVWFPLLVLLVWNPARLVLA). Residues 29 to 249 (NIQEDEAKNN…MTAHFHLKRK (221 aa)) lie on the Extracellular side of the membrane. An N-linked (GlcNAc...) asparagine glycan is attached at Asn38. Position 94 (Arg94) interacts with 4-aminobutanoate. N-linked (GlcNAc...) asparagine glycans are attached at residues Asn114 and Asn138. Thr157 contributes to the 4-aminobutanoate binding site. A disulfide bridge connects residues Cys166 and Cys180. A run of 3 helical transmembrane segments spans residues 250-270 (IGYF…LSQV), 281-300 (ARTV…SISA), and 312-332 (AMDW…IEFA). Residues 333-420 (TVNYFTKRGW…FNSVSKIDRM (88 aa)) lie on the Cytoplasmic side of the membrane. Positions 389–408 (KSATTPEPNKKPENKPAEAK) are disordered. A compositionally biased stretch (basic and acidic residues) spans 396–408 (PNKKPENKPAEAK). A helical transmembrane segment spans residues 421-441 (SRIVFPVLFGTFNLVYWATYL). Residues 442–451 (NREPVLGVSP) lie on the Extracellular side of the membrane.

The protein belongs to the ligand-gated ion channel (TC 1.A.9) family. Gamma-aminobutyric acid receptor (TC 1.A.9.5) subfamily. GABRA2 sub-subfamily. In terms of assembly, heteropentamer, formed by a combination of alpha (GABRA1-6), beta (GABRB1-3), gamma (GABRG1-3), delta (GABRD), epsilon (GABRE), rho (GABRR1-3), pi (GABRP) and theta (GABRQ) subunits, each subunit exhibiting distinct physiological and pharmacological properties. Binds UBQLN1. Interacts with KIF21B. Interacts with LHFPL4. Interacts with SHISA7; interaction leads to the regulation of GABA(A) receptor trafficking, channel deactivation kinetics and pharmacology. In terms of processing, glycosylated. In terms of tissue distribution, expressed in brain (at protein level).

It localises to the postsynaptic cell membrane. It is found in the cell membrane. Its subcellular location is the cytoplasmic vesicle membrane. The protein resides in the cell projection. The protein localises to the dendrite. The catalysed reaction is chloride(in) = chloride(out). Its activity is regulated as follows. Activated by pentobarbital. Inhibited by the antagonist bicuculline. Its function is as follows. Alpha subunit of the heteropentameric ligand-gated chloride channel gated by gamma-aminobutyric acid (GABA), a major inhibitory neurotransmitter in the brain. GABA-gated chloride channels, also named GABA(A) receptors (GABAAR), consist of five subunits arranged around a central pore and contain GABA active binding site(s) located at the alpha and beta subunit interface(s). When activated by GABA, GABAARs selectively allow the flow of chloride anions across the cell membrane down their electrochemical gradient. Chloride influx into the postsynaptic neuron following GABAAR opening decreases the neuron ability to generate a new action potential, thereby reducing nerve transmission. The alpha-2 subunit exhibits synaptogenic activity together with beta-2 and very little to no activity together with beta-3, the gamma-2 subunit being necessary but not sufficient to induce rapid synaptic contacts formation. The polypeptide is Gamma-aminobutyric acid receptor subunit alpha-2 (Rattus norvegicus (Rat)).